The sequence spans 372 residues: Probable peptidoglycan glycosyltransferase FtsW (372 aa).

The Cytoplasmic segment spans residues 1–12 (MQKKSTISWSYD). A helical membrane pass occupies residues 13 to 33 (AWIVICTLSLLALGLLMVASA). The Periplasmic segment spans residues 34–45 (SMVISDRQFGYP). The helical transmembrane segment at 46-66 (FHYFIRHLIYLSLGLTLAWVA) threads the bilayer. Residues 67 to 77 (SRVPIKVWKTY) are Cytoplasmic-facing. A helical transmembrane segment spans residues 78–98 (SGYLFLVGFLLLILVLAPVIG). At 99–109 (KTVNGSRRWIQ) the chain is on the periplasmic side. Residues 110–130 (LGFISLQVSEVVKFVTILYLA) form a helical membrane-spanning segment. The Cytoplasmic portion of the chain corresponds to 131–142 (SFLQRYQSEVQK). Residues 143–163 (ELKGFLKPMLLVGILSGLLLL) form a helical membrane-spanning segment. Over 164–165 (EP) the chain is Periplasmic. A helical membrane pass occupies residues 166-186 (DFGAAVVITMTCLALLFLAGV). Position 187 (Arg-187) is a topological domain, cytoplasmic. Residues 188–208 (LWPFCVLLVLVAGSLILLAIL) form a helical membrane-spanning segment. The Periplasmic segment spans residues 209–277 (SPYRLQRLTS…LFAVLAEELG (69 aa)). A helical membrane pass occupies residues 278 to 298 (LIGEILLMGLFVLLIGRIILI). Over 299-315 (GRRAENSNQLYSAYLAY) the chain is Cytoplasmic. Residues 316-336 (GIALWLGLQVIINIGVTAGVL) form a helical membrane-spanning segment. At 337 to 342 (PTKGLT) the chain is on the periplasmic side. The helical transmembrane segment at 343–363 (LPFISYGGSSLLMNCLAIGVI) threads the bilayer. Residues 364-372 (LRIAYETEN) are Cytoplasmic-facing.

Belongs to the SEDS family. FtsW subfamily.

It is found in the cell inner membrane. The enzyme catalyses [GlcNAc-(1-&gt;4)-Mur2Ac(oyl-L-Ala-gamma-D-Glu-L-Lys-D-Ala-D-Ala)](n)-di-trans,octa-cis-undecaprenyl diphosphate + beta-D-GlcNAc-(1-&gt;4)-Mur2Ac(oyl-L-Ala-gamma-D-Glu-L-Lys-D-Ala-D-Ala)-di-trans,octa-cis-undecaprenyl diphosphate = [GlcNAc-(1-&gt;4)-Mur2Ac(oyl-L-Ala-gamma-D-Glu-L-Lys-D-Ala-D-Ala)](n+1)-di-trans,octa-cis-undecaprenyl diphosphate + di-trans,octa-cis-undecaprenyl diphosphate + H(+). Its pathway is cell wall biogenesis; peptidoglycan biosynthesis. Peptidoglycan polymerase that is essential for cell division. The chain is Probable peptidoglycan glycosyltransferase FtsW from Coxiella burnetii (strain RSA 493 / Nine Mile phase I).